Reading from the N-terminus, the 875-residue chain is Probable dipeptidyl-aminopeptidase B (875 aa).

The tract at residues 1–90 (MSEPKPIQDT…ASSETTPPRK (90 aa)) is disordered. Over 1-98 (MSEPKPIQDT…RKGVDRKLKK (98 aa)) the chain is Cytoplasmic. The segment covering 19 to 28 (SSISSASTTS) has biased composition (low complexity). The segment covering 33 to 46 (RLAEESEKNHDASS) has biased composition (basic and acidic residues). A helical; Signal-anchor for type II membrane protein membrane pass occupies residues 99-119 (VLLIVGGFFVAAWIVSLVVFL). The Vacuolar portion of the chain corresponds to 120–875 (TNKSYKHGSQ…VNDAKPKIES (756 aa)). N354 and N567 each carry an N-linked (GlcNAc...) asparagine glycan. The segment at 689 to 715 (VDFQSSDGGRRTTRSPRRATGRPSATS) is disordered. Positions 699 to 708 (RTTRSPRRAT) are enriched in basic residues. The active-site Charge relay system is S726. N785 carries N-linked (GlcNAc...) asparagine glycosylation. Residues D803 and H836 each act as charge relay system in the active site.

Belongs to the peptidase S9B family.

It is found in the vacuole membrane. It carries out the reaction Release of an N-terminal dipeptide, Xaa-Yaa-|-Zaa-, from a polypeptide, preferentially when Yaa is Pro, provided Zaa is neither Pro nor hydroxyproline.. Type IV dipeptidyl-peptidase which removes N-terminal dipeptides sequentially from polypeptides having unsubstituted N-termini provided that the penultimate residue is proline. This is Probable dipeptidyl-aminopeptidase B (DAPB) from Verticillium alfalfae (strain VaMs.102 / ATCC MYA-4576 / FGSC 10136) (Verticillium wilt of alfalfa).